The chain runs to 138 residues: Small ribosomal subunit protein uS11c (138 aa).

The segment at 1 to 23 is disordered; it reads MAKPILRIGSRKNTRSSSRKNVR. A compositionally biased stretch (basic residues) spans 9–23; it reads GSRKNTRSSSRKNVR.

It belongs to the universal ribosomal protein uS11 family. Part of the 30S ribosomal subunit.

Its subcellular location is the plastid. It is found in the chloroplast. The polypeptide is Small ribosomal subunit protein uS11c (Nasturtium officinale (Watercress)).